Consider the following 274-residue polypeptide: F-box protein SKIP5 (274 aa).

Residues Leu32–Val79 form the F-box domain.

Part of a SCF (SKP1-cullin-F-box) protein ligase complex. Interacts with SKP1A/ASK1.

It participates in protein modification; protein ubiquitination. This is F-box protein SKIP5 (SKIP5) from Arabidopsis thaliana (Mouse-ear cress).